The sequence spans 330 residues: Polyprenyl transferase ausN (330 aa).

The next 5 helical transmembrane spans lie at 116–136 (AATI…LFLP), 165–185 (LILI…GMEP), 189–209 (ILSM…IDLV), 238–258 (AYSL…LGGL), and 260–280 (VPFV…FLRA).

The protein belongs to the UbiA prenyltransferase family. Mg(2+) is required as a cofactor.

It localises to the membrane. The enzyme catalyses 3,5-dimethylorsellinate + (2E,6E)-farnesyl diphosphate = (3R)-3-farnesyl-6-hydroxy-2,3,5-trimethyl-4-oxocyclohexa-1,5-diene-1-carboxylate + diphosphate + H(+). It functions in the pathway secondary metabolite biosynthesis; terpenoid biosynthesis. Functionally, polyprenyl transferase; part of the gene cluster B that mediates the biosynthesis of austinol and dehydroaustinol, two fungal meroterpenoids. The first step of the pathway is the synthesis of 3,5-dimethylorsellinic acid by the polyketide synthase ausA. 3,5-dimethylorsellinic acid is then prenylated by the polyprenyl transferase ausN. Further epoxidation by the FAD-dependent monooxygenase ausM and cyclization by the probable terpene cyclase ausL lead to the formation of protoaustinoid A. Protoaustinoid A is then oxidized to spiro-lactone preaustinoid A3 by the combined action of the FAD-binding monooxygenases ausB and ausC, and the dioxygenase ausE. Acid-catalyzed keto-rearrangement and ring contraction of the tetraketide portion of preaustinoid A3 by ausJ lead to the formation of preaustinoid A4. The aldo-keto reductase ausK, with the help of ausH, is involved in the next step by transforming preaustinoid A4 into isoaustinone which is in turn hydroxylated by the P450 monooxygenase ausI to form austinolide. Finally, the cytochrome P450 monooxygenase ausG modifies austinolide to austinol. Austinol can be further modified to dehydroaustinol which forms a diffusible complex with diorcinol that initiates conidiation. Due to genetic rearrangements of the clusters and the subsequent loss of some enzymes, the end products of the Emericella nidulans austinoid biosynthesis clusters are austinol and dehydroaustinol, even if additional enzymes, such as the O-acetyltransferase ausQ and the cytochrome P450 monooxygenase ausR are still functional. This is Polyprenyl transferase ausN from Emericella nidulans (strain FGSC A4 / ATCC 38163 / CBS 112.46 / NRRL 194 / M139) (Aspergillus nidulans).